The following is an 807-amino-acid chain: Glycerol-3-phosphate acyltransferase (807 aa).

Residues 308–313 (CHRSHM) carry the HXXXXD motif motif.

Belongs to the GPAT/DAPAT family.

The protein localises to the cell inner membrane. The enzyme catalyses sn-glycerol 3-phosphate + an acyl-CoA = a 1-acyl-sn-glycero-3-phosphate + CoA. Its pathway is phospholipid metabolism; CDP-diacylglycerol biosynthesis; CDP-diacylglycerol from sn-glycerol 3-phosphate: step 1/3. In Shewanella denitrificans (strain OS217 / ATCC BAA-1090 / DSM 15013), this protein is Glycerol-3-phosphate acyltransferase.